The primary structure comprises 417 residues: Multifunctional CCA protein (417 aa).

Residues Gly-8 and Arg-11 each contribute to the ATP site. Gly-8 and Arg-11 together coordinate CTP. Mg(2+) contacts are provided by Asp-21 and Asp-23. ATP is bound by residues Arg-91, Arg-137, and Arg-140. Residues Arg-91, Arg-137, and Arg-140 each coordinate CTP. An HD domain is found at 225 to 326; sequence SGIHTLMTLQ…LNVLKKTDAF (102 aa).

It belongs to the tRNA nucleotidyltransferase/poly(A) polymerase family. Bacterial CCA-adding enzyme type 1 subfamily. In terms of assembly, monomer. Can also form homodimers and oligomers. It depends on Mg(2+) as a cofactor. The cofactor is Ni(2+).

It carries out the reaction a tRNA precursor + 2 CTP + ATP = a tRNA with a 3' CCA end + 3 diphosphate. It catalyses the reaction a tRNA with a 3' CCA end + 2 CTP + ATP = a tRNA with a 3' CCACCA end + 3 diphosphate. Catalyzes the addition and repair of the essential 3'-terminal CCA sequence in tRNAs without using a nucleic acid template. Adds these three nucleotides in the order of C, C, and A to the tRNA nucleotide-73, using CTP and ATP as substrates and producing inorganic pyrophosphate. tRNA 3'-terminal CCA addition is required both for tRNA processing and repair. Also involved in tRNA surveillance by mediating tandem CCA addition to generate a CCACCA at the 3' terminus of unstable tRNAs. While stable tRNAs receive only 3'-terminal CCA, unstable tRNAs are marked with CCACCA and rapidly degraded. This chain is Multifunctional CCA protein, found in Neisseria meningitidis serogroup B (strain ATCC BAA-335 / MC58).